The primary structure comprises 49 residues: Large ribosomal subunit protein bL32c (49 aa).

The tract at residues 1-23 (MTPKKRKSKSKKNLRKTNWKKKA) is disordered.

It belongs to the bacterial ribosomal protein bL32 family.

It is found in the plastid. Its subcellular location is the chloroplast. This chain is Large ribosomal subunit protein bL32c, found in Oltmannsiellopsis viridis (Marine flagellate).